The chain runs to 95 residues: MNVYDIIKKPVVTEKTELLRKEYNKYTFEVHPKANKIEIKKAVEAIFNVKVEDVATINKKPITKRHGMRLYKTQAKKKAIVKLAKENTITYSKEV.

Belongs to the universal ribosomal protein uL23 family. Part of the 50S ribosomal subunit. Contacts protein L29, and trigger factor when it is bound to the ribosome.

In terms of biological role, one of the early assembly proteins it binds 23S rRNA. One of the proteins that surrounds the polypeptide exit tunnel on the outside of the ribosome. Forms the main docking site for trigger factor binding to the ribosome. The protein is Large ribosomal subunit protein uL23 of Fusobacterium nucleatum subsp. nucleatum (strain ATCC 25586 / DSM 15643 / BCRC 10681 / CIP 101130 / JCM 8532 / KCTC 2640 / LMG 13131 / VPI 4355).